We begin with the raw amino-acid sequence, 209 residues long: Kynurenine formamidase (209 aa).

Phe19 contributes to the substrate binding site. The Zn(2+) site is built by His49, His53, and Asp55. Catalysis depends on His59, which acts as the Proton donor/acceptor. Zn(2+) contacts are provided by His160 and Glu172.

It belongs to the Cyclase 1 superfamily. KynB family. As to quaternary structure, homodimer. The cofactor is Zn(2+).

The catalysed reaction is N-formyl-L-kynurenine + H2O = L-kynurenine + formate + H(+). It functions in the pathway amino-acid degradation; L-tryptophan degradation via kynurenine pathway; L-kynurenine from L-tryptophan: step 2/2. Its function is as follows. Catalyzes the hydrolysis of N-formyl-L-kynurenine to L-kynurenine, the second step in the kynurenine pathway of tryptophan degradation. The chain is Kynurenine formamidase from Delftia acidovorans (strain DSM 14801 / SPH-1).